Consider the following 84-residue polypeptide: NAD(P)H-quinone oxidoreductase subunit O (84 aa).

The protein belongs to the complex I NdhO subunit family. NDH-1 can be composed of about 15 different subunits; different subcomplexes with different compositions have been identified which probably have different functions.

It localises to the cellular thylakoid membrane. It catalyses the reaction a plastoquinone + NADH + (n+1) H(+)(in) = a plastoquinol + NAD(+) + n H(+)(out). The enzyme catalyses a plastoquinone + NADPH + (n+1) H(+)(in) = a plastoquinol + NADP(+) + n H(+)(out). NDH-1 shuttles electrons from an unknown electron donor, via FMN and iron-sulfur (Fe-S) centers, to quinones in the respiratory and/or the photosynthetic chain. The immediate electron acceptor for the enzyme in this species is believed to be plastoquinone. Couples the redox reaction to proton translocation, and thus conserves the redox energy in a proton gradient. Cyanobacterial NDH-1 also plays a role in inorganic carbon-concentration. This chain is NAD(P)H-quinone oxidoreductase subunit O, found in Synechococcus sp. (strain CC9902).